We begin with the raw amino-acid sequence, 444 residues long: Probable glycine dehydrogenase (decarboxylating) subunit 1 (444 aa).

The protein belongs to the GcvP family. N-terminal subunit subfamily. As to quaternary structure, the glycine cleavage system is composed of four proteins: P, T, L and H. In this organism, the P 'protein' is a heterodimer of two subunits.

It carries out the reaction N(6)-[(R)-lipoyl]-L-lysyl-[glycine-cleavage complex H protein] + glycine + H(+) = N(6)-[(R)-S(8)-aminomethyldihydrolipoyl]-L-lysyl-[glycine-cleavage complex H protein] + CO2. Functionally, the glycine cleavage system catalyzes the degradation of glycine. The P protein binds the alpha-amino group of glycine through its pyridoxal phosphate cofactor; CO(2) is released and the remaining methylamine moiety is then transferred to the lipoamide cofactor of the H protein. The sequence is that of Probable glycine dehydrogenase (decarboxylating) subunit 1 from Moorella thermoacetica (strain ATCC 39073 / JCM 9320).